Reading from the N-terminus, the 327-residue chain is GMP reductase (327 aa).

Cys176 serves as the catalytic Thioimidate intermediate. 205–228 is an NADP(+) binding site; that stretch reads IIADGGIRTHGDIAKSIRFGASMV.

Belongs to the IMPDH/GMPR family. GuaC type 2 subfamily.

It catalyses the reaction IMP + NH4(+) + NADP(+) = GMP + NADPH + 2 H(+). Functionally, catalyzes the irreversible NADPH-dependent deamination of GMP to IMP. It functions in the conversion of nucleobase, nucleoside and nucleotide derivatives of G to A nucleotides, and in maintaining the intracellular balance of A and G nucleotides. This chain is GMP reductase, found in Streptococcus pyogenes serotype M1.